Reading from the N-terminus, the 338-residue chain is Holliday junction branch migration complex subunit RuvB (338 aa).

The interval 1 to 182 (MDDRMVDQSQ…FGVHLRLEYY (182 aa)) is large ATPase domain (RuvB-L). ATP contacts are provided by residues L21, R22, G63, K66, T67, T68, 129–131 (EDF), R172, Y182, and R219. T67 lines the Mg(2+) pocket. The segment at 183 to 253 (KESELKDIII…TTKRALQLLQ (71 aa)) is small ATPAse domain (RuvB-S). Residues 256–338 (DYGLDYIDHK…KNGKRDNFEY (83 aa)) form a head domain (RuvB-H) region. DNA-binding residues include R292, R311, and R316.

The protein belongs to the RuvB family. Homohexamer. Forms an RuvA(8)-RuvB(12)-Holliday junction (HJ) complex. HJ DNA is sandwiched between 2 RuvA tetramers; dsDNA enters through RuvA and exits via RuvB. An RuvB hexamer assembles on each DNA strand where it exits the tetramer. Each RuvB hexamer is contacted by two RuvA subunits (via domain III) on 2 adjacent RuvB subunits; this complex drives branch migration. In the full resolvosome a probable DNA-RuvA(4)-RuvB(12)-RuvC(2) complex forms which resolves the HJ.

The protein resides in the cytoplasm. It carries out the reaction ATP + H2O = ADP + phosphate + H(+). Functionally, the RuvA-RuvB-RuvC complex processes Holliday junction (HJ) DNA during genetic recombination and DNA repair, while the RuvA-RuvB complex plays an important role in the rescue of blocked DNA replication forks via replication fork reversal (RFR). RuvA specifically binds to HJ cruciform DNA, conferring on it an open structure. The RuvB hexamer acts as an ATP-dependent pump, pulling dsDNA into and through the RuvAB complex. RuvB forms 2 homohexamers on either side of HJ DNA bound by 1 or 2 RuvA tetramers; 4 subunits per hexamer contact DNA at a time. Coordinated motions by a converter formed by DNA-disengaged RuvB subunits stimulates ATP hydrolysis and nucleotide exchange. Immobilization of the converter enables RuvB to convert the ATP-contained energy into a lever motion, pulling 2 nucleotides of DNA out of the RuvA tetramer per ATP hydrolyzed, thus driving DNA branch migration. The RuvB motors rotate together with the DNA substrate, which together with the progressing nucleotide cycle form the mechanistic basis for DNA recombination by continuous HJ branch migration. Branch migration allows RuvC to scan DNA until it finds its consensus sequence, where it cleaves and resolves cruciform DNA. This chain is Holliday junction branch migration complex subunit RuvB, found in Staphylococcus carnosus (strain TM300).